Here is a 72-residue protein sequence, read N- to C-terminus: Translation initiation factor IF-1 (72 aa).

The region spanning 1–72 (MAKEELLEFP…TKGRINYRFK (72 aa)) is the S1-like domain.

Belongs to the IF-1 family. As to quaternary structure, component of the 30S ribosomal translation pre-initiation complex which assembles on the 30S ribosome in the order IF-2 and IF-3, IF-1 and N-formylmethionyl-tRNA(fMet); mRNA recruitment can occur at any time during PIC assembly.

Its subcellular location is the cytoplasm. Its function is as follows. One of the essential components for the initiation of protein synthesis. Stabilizes the binding of IF-2 and IF-3 on the 30S subunit to which N-formylmethionyl-tRNA(fMet) subsequently binds. Helps modulate mRNA selection, yielding the 30S pre-initiation complex (PIC). Upon addition of the 50S ribosomal subunit IF-1, IF-2 and IF-3 are released leaving the mature 70S translation initiation complex. This chain is Translation initiation factor IF-1, found in Dinoroseobacter shibae (strain DSM 16493 / NCIMB 14021 / DFL 12).